The chain runs to 390 residues: Uroporphyrinogen decarboxylase 2, chloroplastic (390 aa).

The N-terminal 30 residues, 1–30 (MATACPPLSLQPAYLSGRSARARRPPPAVR), are a transit peptide targeting the chloroplast. Substrate contacts are provided by residues 70 to 74 (RQAGR), Phe-89, Ser-119, Asp-120, Tyr-197, Ser-252, and His-367.

The protein belongs to the uroporphyrinogen decarboxylase family. Homodimer.

The protein resides in the plastid. The protein localises to the chloroplast. The catalysed reaction is uroporphyrinogen III + 4 H(+) = coproporphyrinogen III + 4 CO2. It functions in the pathway porphyrin-containing compound metabolism; protoporphyrin-IX biosynthesis; coproporphyrinogen-III from 5-aminolevulinate: step 4/4. Functionally, catalyzes the decarboxylation of four acetate groups of uroporphyrinogen-III to yield coproporphyrinogen-III. The chain is Uroporphyrinogen decarboxylase 2, chloroplastic from Oryza sativa subsp. japonica (Rice).